Here is a 588-residue protein sequence, read N- to C-terminus: Probable basic-leucine zipper transcription factor M (588 aa).

Residues 127 to 157 are a coiled coil; that stretch reads QVEQQQEQEQEQEQQQKQQQQQYIEKQIQEI. Low complexity predominate over residues 221-240; it reads QQNHIDNQSLNNSNTKTSKN. The interval 221–250 is disordered; sequence QQNHIDNQSLNNSNTKTSKNQQKDNNLPKK. The bZIP domain occupies 263-326; the sequence is NNNNIEKKRD…GSNLMRPEPE (64 aa). Residues 269–289 are basic motif; it reads KKRDQTESSKNFREKKKEYVK. Positions 291–312 are leucine-zipper; that stretch reads IESKILALTLENDKLKKENDSL.

The protein belongs to the bZIP family.

Its subcellular location is the nucleus. Functionally, probable transcriptional regulator. This Dictyostelium discoideum (Social amoeba) protein is Probable basic-leucine zipper transcription factor M (bzpM).